A 79-amino-acid polypeptide reads, in one-letter code: Dolichyl-diphosphooligosaccharide--protein glycosyltransferase subunit TMEM258 (79 aa).

A run of 2 helical transmembrane segments spans residues 17-37 and 55-75; these read VFPH…AWFF and LISL…LLWV.

This sequence belongs to the OST5 family. As to quaternary structure, component of the oligosaccharyltransferase (OST) complex.

It is found in the membrane. It localises to the endoplasmic reticulum. The protein localises to the cytoplasm. It functions in the pathway protein modification; protein glycosylation. Functionally, subunit of the oligosaccharyl transferase (OST) complex that catalyzes the initial transfer of a defined glycan (Glc(3)Man(9)GlcNAc(2) in eukaryotes) from the lipid carrier dolichol-pyrophosphate to an asparagine residue within an Asn-X-Ser/Thr consensus motif in nascent polypeptide chains, the first step in protein N-glycosylation. N-glycosylation occurs cotranslationally and the complex associates with the Sec61 complex at the channel-forming translocon complex that mediates protein translocation across the endoplasmic reticulum (ER). All subunits are required for a maximal enzyme activity. This chain is Dolichyl-diphosphooligosaccharide--protein glycosyltransferase subunit TMEM258, found in Gallus gallus (Chicken).